Consider the following 313-residue polypeptide: Protein MFI (313 aa).

Can homodimerize. Interacts with MFF; the interaction inhibits MFF interaction with DNM1L. In terms of tissue distribution, enriched in the pancreatic beta cell and the testis and is expressed at low levels in other tissues tested.

The protein resides in the cytoplasm. Its subcellular location is the cytosol. It localises to the mitochondrion outer membrane. In terms of biological role, acts as an inhibitor of mitochondrial fission. Interacts with MFF and prevents DNM1L recruitment to mitochondria, promoting a more fused mitochondrial network. The protein is Protein MFI of Homo sapiens (Human).